Here is a 307-residue protein sequence, read N- to C-terminus: MTSKIKCALIGSGNIGTDLLYKLMRSDVLEPVWMVGIDPESDGLARAKAAGLKVTADGINGLLPFVEADEIKIAFDATSAYVHAENSRKLNELGVVMIDLTPAAIGPFCVPPVNLSQLDENVKNINMVTCGGQATIPMVAAVSRVQAVEYGEIVATVSSRSVGPGTRQNIDEFTRTTAGAVEQIGGAEKGKAIIVINPAEPPLLMRDTIHCLTKEQPDEQAITASVHEMIEQVQQYVPGYTLKNGPVFDGRKVTIFLEVEGLGDYLPKYAGNLDIMTAAAARTAEMLASKMLNPEPHYNVTQEAALA.

An NAD(+)-binding site is contributed by 12–15 (SGNI). Residue Cys-130 is the Acyl-thioester intermediate of the active site. NAD(+) is bound by residues 161–169 (SVGPGTRQN) and Asn-272.

It belongs to the acetaldehyde dehydrogenase family.

It carries out the reaction acetaldehyde + NAD(+) + CoA = acetyl-CoA + NADH + H(+). This is Acetaldehyde dehydrogenase from Shewanella halifaxensis (strain HAW-EB4).